We begin with the raw amino-acid sequence, 341 residues long: L-threonine 3-dehydrogenase (341 aa).

Zn(2+) is bound at residue cysteine 38. Active-site charge relay system residues include threonine 40 and histidine 43. Residues histidine 63, glutamate 64, cysteine 93, cysteine 96, cysteine 99, and cysteine 107 each contribute to the Zn(2+) site. Residues isoleucine 175, aspartate 195, arginine 200, 262–264 (LGI), and 286–287 (IY) contribute to the NAD(+) site.

It belongs to the zinc-containing alcohol dehydrogenase family. Homotetramer. Zn(2+) serves as cofactor.

The protein resides in the cytoplasm. The enzyme catalyses L-threonine + NAD(+) = (2S)-2-amino-3-oxobutanoate + NADH + H(+). Its pathway is amino-acid degradation; L-threonine degradation via oxydo-reductase pathway; glycine from L-threonine: step 1/2. Catalyzes the NAD(+)-dependent oxidation of L-threonine to 2-amino-3-ketobutyrate. This Shewanella pealeana (strain ATCC 700345 / ANG-SQ1) protein is L-threonine 3-dehydrogenase.